The chain runs to 140 residues: ATP synthase epsilon chain (140 aa).

Belongs to the ATPase epsilon chain family. As to quaternary structure, F-type ATPases have 2 components, CF(1) - the catalytic core - and CF(0) - the membrane proton channel. CF(1) has five subunits: alpha(3), beta(3), gamma(1), delta(1), epsilon(1). CF(0) has three main subunits: a, b and c.

It localises to the cell inner membrane. Its function is as follows. Produces ATP from ADP in the presence of a proton gradient across the membrane. In Yersinia enterocolitica serotype O:8 / biotype 1B (strain NCTC 13174 / 8081), this protein is ATP synthase epsilon chain.